A 692-amino-acid polypeptide reads, in one-letter code: Mitogen-activated protein kinase kinase kinase 7-interacting protein 3 homolog (692 aa).

In terms of domain architecture, CUE spans 8–51; sequence LDIQVLNDLQQRFPEIPRDVVSQCMLQNNSNLDACYRALTQESC. Disordered regions lie at residues 138–159, 206–333, and 349–427; these read NDQNRNSPTPPPQPVQQPGVGT, YGTP…PYGP, and SQQR…VVMS. Composition is skewed to polar residues over residues 215-230, 249-298, and 349-387; these read PSQNSPGRQTQQNTAW, QSFQ…QTSH, and SQQRPGPTLNRSPSPINNQSAQRSQQHPVYVSNARSGSP. The segment covering 409–422 has biased composition (low complexity); that stretch reads SQPPTTTGSPTPSS. A coiled-coil region spans residues 496–580; it reads ALLLHQRARM…QKEIDLLQSR (85 aa). Positions 598–662 are disordered; it reads SPGPAVPPNT…SPRPGRDEDF (65 aa). The span at 608-620 shows a compositional bias: basic and acidic residues; it reads CKKESSETTSGER. The RanBP2-type zinc finger occupies 662-692; it reads FEGSPWNCNSCTFLNHPALNRCEQCEMPRFT.

Its function is as follows. May play a role in signaling pathway. The protein is Mitogen-activated protein kinase kinase kinase 7-interacting protein 3 homolog (map3k7ip3) of Xenopus laevis (African clawed frog).